A 464-amino-acid polypeptide reads, in one-letter code: Fumarate hydratase class II (464 aa).

Substrate-binding positions include 96–98 (SGT), 127–130 (HPND), 137–139 (SSN), and threonine 185. Histidine 186 (proton donor/acceptor) is an active-site residue. Serine 316 is an active-site residue. Residues serine 317 and 322–324 (KVN) each bind substrate.

Belongs to the class-II fumarase/aspartase family. Fumarase subfamily. Homotetramer.

The protein localises to the cytoplasm. The enzyme catalyses (S)-malate = fumarate + H2O. It functions in the pathway carbohydrate metabolism; tricarboxylic acid cycle; (S)-malate from fumarate: step 1/1. Functionally, involved in the TCA cycle. Catalyzes the stereospecific interconversion of fumarate to L-malate. In Pseudomonas syringae pv. tomato (strain ATCC BAA-871 / DC3000), this protein is Fumarate hydratase class II.